A 485-amino-acid chain; its full sequence is Protein nucleotidyltransferase YdiU (485 aa).

ATP-binding residues include glycine 90, glycine 92, arginine 93, lysine 113, aspartate 125, glycine 126, arginine 176, and arginine 183. Catalysis depends on aspartate 252, which acts as the Proton acceptor. Mg(2+) is bound by residues asparagine 253 and aspartate 262. Aspartate 262 lines the ATP pocket.

The protein belongs to the SELO family. Mg(2+) is required as a cofactor. Mn(2+) serves as cofactor.

The catalysed reaction is L-seryl-[protein] + ATP = 3-O-(5'-adenylyl)-L-seryl-[protein] + diphosphate. It carries out the reaction L-threonyl-[protein] + ATP = 3-O-(5'-adenylyl)-L-threonyl-[protein] + diphosphate. It catalyses the reaction L-tyrosyl-[protein] + ATP = O-(5'-adenylyl)-L-tyrosyl-[protein] + diphosphate. The enzyme catalyses L-histidyl-[protein] + UTP = N(tele)-(5'-uridylyl)-L-histidyl-[protein] + diphosphate. The catalysed reaction is L-seryl-[protein] + UTP = O-(5'-uridylyl)-L-seryl-[protein] + diphosphate. It carries out the reaction L-tyrosyl-[protein] + UTP = O-(5'-uridylyl)-L-tyrosyl-[protein] + diphosphate. Nucleotidyltransferase involved in the post-translational modification of proteins. It can catalyze the addition of adenosine monophosphate (AMP) or uridine monophosphate (UMP) to a protein, resulting in modifications known as AMPylation and UMPylation. The polypeptide is Protein nucleotidyltransferase YdiU (Aliivibrio salmonicida (strain LFI1238) (Vibrio salmonicida (strain LFI1238))).